The sequence spans 675 residues: Potassium-transporting ATPase ATP-binding subunit (675 aa).

Helical transmembrane passes span 34–54 (IMFV…FPDI), 65–85 (LITI…SEAF), 216–236 (IALF…IVTL), and 245–265 (LILP…TTIG). Aspartate 304 functions as the 4-aspartylphosphate intermediate in the catalytic mechanism. ATP is bound by residues aspartate 341, glutamate 345, 372–379 (FTAETRMS), and lysine 390. Mg(2+)-binding residues include aspartate 513 and aspartate 517. Transmembrane regions (helical) follow at residues 569–591 (ALTT…ALMM), 611–631 (AIIS…PIAM), and 644–664 (IFIN…FLGI).

This sequence belongs to the cation transport ATPase (P-type) (TC 3.A.3) family. Type IA subfamily. In terms of assembly, the system is composed of three essential subunits: KdpA, KdpB and KdpC.

It is found in the cell membrane. The catalysed reaction is K(+)(out) + ATP + H2O = K(+)(in) + ADP + phosphate + H(+). Functionally, part of the high-affinity ATP-driven potassium transport (or Kdp) system, which catalyzes the hydrolysis of ATP coupled with the electrogenic transport of potassium into the cytoplasm. This subunit is responsible for energy coupling to the transport system and for the release of the potassium ions to the cytoplasm. This chain is Potassium-transporting ATPase ATP-binding subunit, found in Staphylococcus aureus (strain Newman).